We begin with the raw amino-acid sequence, 508 residues long: Photosystem II CP47 reaction center protein (508 aa).

The next 6 helical transmembrane spans lie at 21–36 (AVHIMHTALVSGWAGS), 101–115 (IILSGLLFLAAIWHW), 140–156 (GIHLFLSGLLCFGFGAF), 203–218 (IAAGILGILAGLFHLS), 237–252 (VLSSSIAAVFFAAFIV), and 457–472 (CFALLFFFGHIWHGAR).

The protein belongs to the PsbB/PsbC family. PsbB subfamily. In terms of assembly, PSII is composed of 1 copy each of membrane proteins PsbA, PsbB, PsbC, PsbD, PsbE, PsbF, PsbH, PsbI, PsbJ, PsbK, PsbL, PsbM, PsbT, PsbX, PsbY, PsbZ, Psb30/Ycf12, at least 3 peripheral proteins of the oxygen-evolving complex and a large number of cofactors. It forms dimeric complexes. Binds multiple chlorophylls. PSII binds additional chlorophylls, carotenoids and specific lipids. is required as a cofactor.

Its subcellular location is the plastid. The protein resides in the chloroplast thylakoid membrane. In terms of biological role, one of the components of the core complex of photosystem II (PSII). It binds chlorophyll and helps catalyze the primary light-induced photochemical processes of PSII. PSII is a light-driven water:plastoquinone oxidoreductase, using light energy to abstract electrons from H(2)O, generating O(2) and a proton gradient subsequently used for ATP formation. In Chara vulgaris (Common stonewort), this protein is Photosystem II CP47 reaction center protein.